The chain runs to 147 residues: Hemoglobin subunit epsilon-4 (147 aa).

The Globin domain maps to 3–147 (HFTTEEKAAV…VANALAHKYH (145 aa)). Residues H64 and H93 each coordinate heme b.

This sequence belongs to the globin family. As to expression, red blood cells.

Functionally, hemoglobin epsilon chain is a beta-type chain found in early embryos. This chain is Hemoglobin subunit epsilon-4 (HBE4), found in Bos taurus (Bovine).